The primary structure comprises 833 residues: DNA gyrase subunit A (833 aa).

Residues 35–498 form the Topo IIA-type catalytic domain; the sequence is LPDVRDGMKP…SEDMFEDEDL (464 aa). The active-site O-(5'-phospho-DNA)-tyrosine intermediate is Y123. The GyrA-box signature appears at 525–531; sequence QKRGGRG. Positions 803-833 are disordered; it reads RVDIEDDELDEDESIEEERDDRSEVEQGENE. Residues 806 to 821 show a composition bias toward acidic residues; sequence IEDDELDEDESIEEER.

Belongs to the type II topoisomerase GyrA/ParC subunit family. Heterotetramer, composed of two GyrA and two GyrB chains. In the heterotetramer, GyrA contains the active site tyrosine that forms a transient covalent intermediate with DNA, while GyrB binds cofactors and catalyzes ATP hydrolysis.

Its subcellular location is the cytoplasm. The catalysed reaction is ATP-dependent breakage, passage and rejoining of double-stranded DNA.. Functionally, a type II topoisomerase that negatively supercoils closed circular double-stranded (ds) DNA in an ATP-dependent manner to modulate DNA topology and maintain chromosomes in an underwound state. Negative supercoiling favors strand separation, and DNA replication, transcription, recombination and repair, all of which involve strand separation. Also able to catalyze the interconversion of other topological isomers of dsDNA rings, including catenanes and knotted rings. Type II topoisomerases break and join 2 DNA strands simultaneously in an ATP-dependent manner. The chain is DNA gyrase subunit A from Halalkalibacterium halodurans (strain ATCC BAA-125 / DSM 18197 / FERM 7344 / JCM 9153 / C-125) (Bacillus halodurans).